A 141-amino-acid polypeptide reads, in one-letter code: Endoribonuclease YbeY (141 aa).

Zn(2+)-binding residues include His-101, His-105, and His-111.

This sequence belongs to the endoribonuclease YbeY family. Zn(2+) serves as cofactor.

Its subcellular location is the cytoplasm. Functionally, single strand-specific metallo-endoribonuclease involved in late-stage 70S ribosome quality control and in maturation of the 3' terminus of the 16S rRNA. The sequence is that of Endoribonuclease YbeY from Nitrosomonas eutropha (strain DSM 101675 / C91 / Nm57).